Reading from the N-terminus, the 142-residue chain is Putative transcriptional regulatory protein Mevan_1098 (142 aa).

The protein belongs to the Tfx family.

Its function is as follows. Putative transcriptional regulator. This Methanococcus vannielii (strain ATCC 35089 / DSM 1224 / JCM 13029 / OCM 148 / SB) protein is Putative transcriptional regulatory protein Mevan_1098.